Reading from the N-terminus, the 578-residue chain is Transmembrane protein 121B (578 aa).

Disordered stretches follow at residues 1 to 84 and 106 to 129; these read MRPA…ESLS and AGPA…PTSS. 2 stretches are compositionally biased toward low complexity: residues 8–17 and 44–53; these read PRSVSSASGS and GDSSTSTSTS. The span at 54–67 shows a compositional bias: gly residues; the sequence is RGGGGGRRGGGGGS. Residue S167 is modified to Phosphoserine. The tract at residues 529–557 is disordered; it reads RARGGYGAPPSAPPPPPPPPQGGSQLGHC. Residues 538-549 show a composition bias toward pro residues; the sequence is PSAPPPPPPPPQ. S552 carries the phosphoserine modification.

It belongs to the TMEM121 family. Widely expressed, especially in adult heart, brain, prostate, testes, peripherical blood leukocytes and fetal brain.

The protein is Transmembrane protein 121B of Homo sapiens (Human).